We begin with the raw amino-acid sequence, 628 residues long: Vacuolar-sorting receptor 3 (628 aa).

A signal peptide spans 1–24 (MKQLLCYLPWLLLLTLLVSPLNDA). Over 25–569 (RFVVEKNSLS…SKTGAQVRSA (545 aa)) the chain is Lumenal. The 113-residue stretch at 56 to 168 (QYGGSMAGTV…GFGEKLKKAI (113 aa)) folds into the PA domain. 3 N-linked (GlcNAc...) asparagine glycosylation sites follow: Asn148, Asn294, and Asn434. 2 EGF-like domains span residues 416-466 (ESNE…SHCE) and 469-516 (GPGR…KKCE). Cystine bridges form between Cys420–Cys438, Cys427–Cys447, Cys449–Cys465, Cys473–Cys493, Cys480–Cys501, Cys503–Cys515, and Cys545–Cys558. One can recognise an EGF-like 3; calcium-binding domain in the interval 517-559 (DINECKEKKACQCPECSCKNTWGSYECSCSGDLLYIRDHDTCI). Residues 570–590 (WAAVWLIMLSLGLAAAGAYLV) form a helical membrane-spanning segment. Residues 591–628 (YKYRLRQYMDSEIRAIMAQYMPLDSQPEIPNHVNDERA) are Cytoplasmic-facing. The Tyrosine-based internalization motif motif lies at 610 to 613 (YMPL).

It belongs to the VSR (BP-80) family. Expressed in seeds, seedlings, roots, leaves, flowers and siliques.

The protein resides in the membrane. The protein localises to the golgi apparatus membrane. It is found in the cytoplasmic vesicle. It localises to the clathrin-coated vesicle membrane. Its subcellular location is the prevacuolar compartment membrane. Functionally, vacuolar-sorting receptor (VSR) involved in clathrin-coated vesicles sorting from Golgi apparatus to vacuoles. This chain is Vacuolar-sorting receptor 3 (VSR3), found in Arabidopsis thaliana (Mouse-ear cress).